The following is a 123-amino-acid chain: Ribonuclease P protein component (123 aa).

The protein belongs to the RnpA family. Consists of a catalytic RNA component (M1 or rnpB) and a protein subunit.

The catalysed reaction is Endonucleolytic cleavage of RNA, removing 5'-extranucleotides from tRNA precursor.. In terms of biological role, RNaseP catalyzes the removal of the 5'-leader sequence from pre-tRNA to produce the mature 5'-terminus. It can also cleave other RNA substrates such as 4.5S RNA. The protein component plays an auxiliary but essential role in vivo by binding to the 5'-leader sequence and broadening the substrate specificity of the ribozyme. The polypeptide is Ribonuclease P protein component (Bordetella petrii (strain ATCC BAA-461 / DSM 12804 / CCUG 43448)).